We begin with the raw amino-acid sequence, 89 residues long: uncharacterized protein (89 aa).

A signal peptide spans 1–27 (MKKAAAVLLSLGLVFGFSYGAGHVAEA).

This is an uncharacterized protein from Bacillus subtilis (strain 168).